The sequence spans 356 residues: Aminodeoxyfutalosine deaminase (356 aa).

Zn(2+) contacts are provided by histidine 18 and histidine 20. Arginine 73, glutamate 140, and glycine 172 together coordinate substrate. A Zn(2+)-binding site is contributed by histidine 199. Glutamate 202 (proton donor) is an active-site residue. Aspartate 287 contacts Zn(2+).

Belongs to the metallo-dependent hydrolases superfamily. Adenosine and AMP deaminases family. The cofactor is Zn(2+).

It catalyses the reaction 6-amino-6-deoxyfutalosine + H2O + H(+) = futalosine + NH4(+). Its pathway is quinol/quinone metabolism; menaquinone biosynthesis. Its function is as follows. Catalyzes the deamination of aminodeoxyfutalosine (AFL) into futalosine (FL), a step in the biosynthesis of menaquinone (MK, vitamin K2). Is very poorly efficient on 1-(6-amino-9H-purin-9-yl)-1-deoxy-N-ethyl-beta-D-ribofuranuronamide (NECA), adenosine, 5'-methylthioadenosine, 5'-deoxyadenosine, 2'-deoxyadenosine, and AMP as substrate. The polypeptide is Aminodeoxyfutalosine deaminase (Acidothermus cellulolyticus (strain ATCC 43068 / DSM 8971 / 11B)).